The following is a 317-amino-acid chain: Apolipoprotein E (317 aa).

A signal peptide spans 1-18 (MKALWVALVVTLLAGCRA). Tandem repeats lie at residues 79 to 100 (ALMEETMKEVKAYKAELEEQLS), 101 to 122 (PVAQETRARLSKELQAAQARLG), 123 to 144 (TDMEDLRSRLAHYRNEVQAMLG), 145 to 166 (QTTDELRNRLASHLRKLRKRLL), 167 to 188 (RDAEDLQKRLAVYRAGAVEGAE), 189 to 210 (RSVSALRERLGPLVEQGRLGTA), 211 to 232 (TTSTLGSQPLRERAEAWGQKLR), and 233 to 254 (GRLEAVGARAQDRLDKMREQLE). Residues 79–254 (ALMEETMKEV…RLDKMREQLE (176 aa)) form an 8 X 22 AA approximate tandem repeats region. A Methionine sulfoxide modification is found at Met-142. Residues 157-167 (HLRKLRKRLLR) are LDL and other lipoprotein receptors binding. 161-164 (LRKR) lines the heparin pocket. Residues 209 to 289 (TATTSTLGSQ…GWFQPLVEDL (81 aa)) form a lipid-binding and lipoprotein association region. O-linked (GalNAc...) threonine glycosylation occurs at Thr-211. Residue 228–235 (GQKLRGRL) participates in heparin binding. Residues 265–317 (SQMRLQAETFQARLKGWFQPLVEDLQRQWAGLVEKVQQLAVGTTPTPAASKNQ) form a homooligomerization region. The specificity for association with VLDL stretch occupies residues 277–289 (RLKGWFQPLVEDL). O-linked (GalNAc...) threonine glycosylation is present at Thr-310.

Belongs to the apolipoprotein A1/A4/E family. As to quaternary structure, homotetramer. May interact with ABCA1; functionally associated with ABCA1 in the biogenesis of HDLs. May interact with APP/A4 amyloid-beta peptide; the interaction is extremely stable in vitro but its physiological significance is unclear. May interact with MAPT. May interact with MAP2. In the cerebrospinal fluid, interacts with secreted SORL1. Interacts with PMEL; this allows the loading of PMEL luminal fragment on ILVs to induce fibril nucleation. In terms of processing, APOE exists as multiple glycosylated and sialylated glycoforms within cells and in plasma. The extent of glycosylation and sialylation are tissue and context specific. Post-translationally, glycated in plasma VLDL. Phosphorylated by FAM20C in the extracellular medium.

Its subcellular location is the secreted. The protein localises to the extracellular space. It localises to the extracellular matrix. The protein resides in the extracellular vesicle. It is found in the endosome. Its subcellular location is the multivesicular body. Functionally, APOE is an apolipoprotein, a protein associating with lipid particles, that mainly functions in lipoprotein-mediated lipid transport between organs via the plasma and interstitial fluids. APOE is a core component of plasma lipoproteins and is involved in their production, conversion and clearance. Apolipoproteins are amphipathic molecules that interact both with lipids of the lipoprotein particle core and the aqueous environment of the plasma. As such, APOE associates with chylomicrons, chylomicron remnants, very low density lipoproteins (VLDL) and intermediate density lipoproteins (IDL) but shows a preferential binding to high-density lipoproteins (HDL). It also binds a wide range of cellular receptors including the LDL receptor/LDLR and the very low-density lipoprotein receptor/VLDLR that mediate the cellular uptake of the APOE-containing lipoprotein particles. Finally, APOE also has a heparin-binding activity and binds heparan-sulfate proteoglycans on the surface of cells, a property that supports the capture and the receptor-mediated uptake of APOE-containing lipoproteins by cells. The chain is Apolipoprotein E (APOE) from Camelus dromedarius (Dromedary).